The chain runs to 800 residues: Phenylalanine--tRNA ligase beta subunit (800 aa).

Residues 39–154 form the tRNA-binding domain; it reads TKEIKNLVVG…TEVKPGTDAL (116 aa). Residues 408-483 enclose the B5 domain; it reads CFVTPIDISV…RIYGYDKIPS (76 aa). Residues Asp461, Asp467, Glu470, and Glu471 each contribute to the Mg(2+) site. The FDX-ACB domain maps to 708–800; it reads PRFPGVSRDI…ALKSEGATIR (93 aa).

It belongs to the phenylalanyl-tRNA synthetase beta subunit family. Type 1 subfamily. As to quaternary structure, tetramer of two alpha and two beta subunits. Requires Mg(2+) as cofactor.

The protein localises to the cytoplasm. The catalysed reaction is tRNA(Phe) + L-phenylalanine + ATP = L-phenylalanyl-tRNA(Phe) + AMP + diphosphate + H(+). The sequence is that of Phenylalanine--tRNA ligase beta subunit from Staphylococcus saprophyticus subsp. saprophyticus (strain ATCC 15305 / DSM 20229 / NCIMB 8711 / NCTC 7292 / S-41).